A 402-amino-acid chain; its full sequence is Acyl-[acyl-carrier-protein] desaturase 3, chloroplastic (402 aa).

The N-terminal 32 residues, 1–32 (MSLTGCLPPRPPCSMRRRTSGGGASVSPVVAM), are a transit peptide targeting the chloroplast. A disordered region spans residues 1–66 (MSLTGCLPPR…EVPPQVTHTL (66 aa)). Fe cation is bound by residues glutamate 139, glutamate 178, histidine 181, glutamate 231, glutamate 264, and histidine 267.

Belongs to the fatty acid desaturase type 2 family. As to quaternary structure, homodimer. The cofactor is Fe(2+).

The protein localises to the plastid. It is found in the chloroplast. It functions in the pathway lipid metabolism; fatty acid metabolism. Introduces a cis double bond in the acyl chain of an acyl-[acyl-carrier protein]. This chain is Acyl-[acyl-carrier-protein] desaturase 3, chloroplastic, found in Oryza sativa subsp. japonica (Rice).